Consider the following 251-residue polypeptide: Uridylate kinase (251 aa).

Residue 11–14 (KLSG) coordinates ATP. Residues 19–24 (GNQGFG) form an involved in allosteric activation by GTP region. A UMP-binding site is contributed by glycine 53. ATP-binding residues include glycine 54 and arginine 58. UMP-binding positions include aspartate 73 and 134–141 (TGNPYFTT). 3 residues coordinate ATP: threonine 161, tyrosine 167, and aspartate 170.

This sequence belongs to the UMP kinase family. Homohexamer.

The protein localises to the cytoplasm. The enzyme catalyses UMP + ATP = UDP + ADP. It participates in pyrimidine metabolism; CTP biosynthesis via de novo pathway; UDP from UMP (UMPK route): step 1/1. Allosterically activated by GTP. Inhibited by UTP. Catalyzes the reversible phosphorylation of UMP to UDP. The polypeptide is Uridylate kinase (Protochlamydia amoebophila (strain UWE25)).